Consider the following 826-residue polypeptide: BLOC-2 complex member HPS5 homolog (826 aa).

3 WD repeats span residues 22–61, 63–102, and 110–149; these read KHHN…LLLI, NKHG…QATP, and DQSV…GHSL. Over residues 422–446 the composition is skewed to polar residues; the sequence is ALDTHSSGGSSATTERSLSGGSSSR. The interval 422-447 is disordered; sequence ALDTHSSGGSSATTERSLSGGSSSRA.

This sequence belongs to the HPS5 family. In terms of tissue distribution, expressed in eye pigment granules.

In terms of biological role, has a role in the biogenesis of eye pigment granules. Eye pigment granules are specialized forms of late endosomes or lysosomes. Biogenesis of pigment granules in the eye requires molecular components required for protein delivery to lysosomes. The polypeptide is BLOC-2 complex member HPS5 homolog (Drosophila melanogaster (Fruit fly)).